We begin with the raw amino-acid sequence, 102 residues long: Small ribosomal subunit protein uS10 (102 aa).

The protein belongs to the universal ribosomal protein uS10 family. As to quaternary structure, part of the 30S ribosomal subunit.

Its function is as follows. Involved in the binding of tRNA to the ribosomes. In Bacillus thuringiensis (strain Al Hakam), this protein is Small ribosomal subunit protein uS10.